The following is a 61-amino-acid chain: Large ribosomal subunit protein bL28 (61 aa).

The interval 1-27 is disordered; sequence MAKDFVTGKKTTFGNTRSHALNSSSRS. Positions 9-27 are enriched in polar residues; sequence KKTTFGNTRSHALNSSSRS.

This sequence belongs to the bacterial ribosomal protein bL28 family.

The chain is Large ribosomal subunit protein bL28 from Lactobacillus delbrueckii subsp. bulgaricus (strain ATCC 11842 / DSM 20081 / BCRC 10696 / JCM 1002 / NBRC 13953 / NCIMB 11778 / NCTC 12712 / WDCM 00102 / Lb 14).